Reading from the N-terminus, the 43-residue chain is Protein PsbN (43 aa).

A helical transmembrane segment spans residues 7–29; the sequence is IVIFVSSLLLGITTYSVYTAFGP.

Belongs to the PsbN family.

Its subcellular location is the plastid. It localises to the chloroplast thylakoid membrane. Its function is as follows. May play a role in photosystem I and II biogenesis. The protein is Protein PsbN of Phaeodactylum tricornutum (strain CCAP 1055/1).